The following is a 310-amino-acid chain: Malate dehydrogenase (310 aa).

NAD(+) contacts are provided by residues 7-12 (GAGNVG) and Asp-32. Substrate-binding residues include Arg-81 and Arg-87. Residues Asn-94 and 117 to 119 (VSN) contribute to the NAD(+) site. Substrate-binding residues include Asn-119 and Arg-150. Residue His-174 is the Proton acceptor of the active site.

The protein belongs to the LDH/MDH superfamily. MDH type 3 family.

It catalyses the reaction (S)-malate + NAD(+) = oxaloacetate + NADH + H(+). Functionally, catalyzes the reversible oxidation of malate to oxaloacetate. This Chlorobium luteolum (strain DSM 273 / BCRC 81028 / 2530) (Pelodictyon luteolum) protein is Malate dehydrogenase.